The following is a 440-amino-acid chain: Chromosome partition protein MukF (440 aa).

Residues 208-236 (LSETSGTLRELQDTLEAAGDKLQANLLRI) form a leucine-zipper region.

It belongs to the MukF family. As to quaternary structure, interacts, and probably forms a ternary complex, with MukE and MukB via its C-terminal region. The complex formation is stimulated by calcium or magnesium. It is required for an interaction between MukE and MukB.

It is found in the cytoplasm. The protein localises to the nucleoid. Its function is as follows. Involved in chromosome condensation, segregation and cell cycle progression. May participate in facilitating chromosome segregation by condensation DNA from both sides of a centrally located replisome during cell division. Not required for mini-F plasmid partitioning. Probably acts via its interaction with MukB and MukE. Overexpression results in anucleate cells. It has a calcium binding activity. The protein is Chromosome partition protein MukF of Escherichia coli (strain ATCC 8739 / DSM 1576 / NBRC 3972 / NCIMB 8545 / WDCM 00012 / Crooks).